Consider the following 119-residue polypeptide: Large ribosomal subunit protein uL18 (119 aa).

It belongs to the universal ribosomal protein uL18 family. As to quaternary structure, part of the 50S ribosomal subunit; part of the 5S rRNA/L5/L18/L25 subcomplex. Contacts the 5S and 23S rRNAs.

This is one of the proteins that bind and probably mediate the attachment of the 5S RNA into the large ribosomal subunit, where it forms part of the central protuberance. This chain is Large ribosomal subunit protein uL18, found in Cereibacter sphaeroides (strain ATCC 17029 / ATH 2.4.9) (Rhodobacter sphaeroides).